A 77-amino-acid polypeptide reads, in one-letter code: Translation initiation factor IF-1, chloroplastic (77 aa).

An S1-like domain is found at 1-71; that stretch reads MKEQKLIHEG…TRGRIIYRLR (71 aa).

It belongs to the IF-1 family. As to quaternary structure, component of the 30S ribosomal translation pre-initiation complex which assembles on the 30S ribosome in the order IF-2 and IF-3, IF-1 and N-formylmethionyl-tRNA(fMet); mRNA recruitment can occur at any time during PIC assembly.

The protein resides in the plastid. The protein localises to the chloroplast. One of the essential components for the initiation of protein synthesis. Stabilizes the binding of IF-2 and IF-3 on the 30S subunit to which N-formylmethionyl-tRNA(fMet) subsequently binds. Helps modulate mRNA selection, yielding the 30S pre-initiation complex (PIC). Upon addition of the 50S ribosomal subunit IF-1, IF-2 and IF-3 are released leaving the mature 70S translation initiation complex. The polypeptide is Translation initiation factor IF-1, chloroplastic (Calycanthus floridus var. glaucus (Eastern sweetshrub)).